The following is a 156-amino-acid chain: ATP synthase subunit b (156 aa).

A helical transmembrane segment spans residues 11 to 31 (AIAFVLFVLFCMKYVWPPIMA).

It belongs to the ATPase B chain family. As to quaternary structure, F-type ATPases have 2 components, F(1) - the catalytic core - and F(0) - the membrane proton channel. F(1) has five subunits: alpha(3), beta(3), gamma(1), delta(1), epsilon(1). F(0) has three main subunits: a(1), b(2) and c(10-14). The alpha and beta chains form an alternating ring which encloses part of the gamma chain. F(1) is attached to F(0) by a central stalk formed by the gamma and epsilon chains, while a peripheral stalk is formed by the delta and b chains.

The protein localises to the cell inner membrane. F(1)F(0) ATP synthase produces ATP from ADP in the presence of a proton or sodium gradient. F-type ATPases consist of two structural domains, F(1) containing the extramembraneous catalytic core and F(0) containing the membrane proton channel, linked together by a central stalk and a peripheral stalk. During catalysis, ATP synthesis in the catalytic domain of F(1) is coupled via a rotary mechanism of the central stalk subunits to proton translocation. In terms of biological role, component of the F(0) channel, it forms part of the peripheral stalk, linking F(1) to F(0). The sequence is that of ATP synthase subunit b from Proteus mirabilis (strain HI4320).